The chain runs to 238 residues: Aspirochlorine biosynthesis protein N (238 aa).

Belongs to the asaB hydroxylase/desaturase family.

Its pathway is mycotoxin biosynthesis. Its function is as follows. Part of the gene cluster that mediates the biosynthesis of aspirochlorine (or antibiotic A30641), an unusual halogenated spiro compound with distinctive antifungal properties due to selective inhibition of protein biosynthesis, and which is also active against bacteria, viruses, and murine tumor cells. The non-ribosomal peptide synthetase (NRPS) aclP is responsible the formation of the diketopiperazine (DKP) core from the condensation of 2 phenylalanine residues. One Phe residue is tailored into chlorotyrosine by hydroxylation and chlorination, whereas the second Phe undergoes an unprecedented C-C bond cleavage to be converted into glycine. After formation of the DKP, sulfur is incorporated into the DKP by conjugation with glutathione by aclG, followed by its stepwise degradation to the thiol by aclI, aclJ and aclK, and the dithiol oxidation by aclT. In addition, oxygenases (aclB, aclC, aclL and aclO) and O-methyltransferases (aclM and aclU) act as tailoring enzymes to produce the intermediate dechloroaspirochlorine. Ultimately, chlorination of dechloroaspirochlorine by the halogenase aclH is the last step in the aspirochlorine pathway. This Aspergillus oryzae (strain ATCC 42149 / RIB 40) (Yellow koji mold) protein is Aspirochlorine biosynthesis protein N.